We begin with the raw amino-acid sequence, 74 residues long: MSKEDAIEMEGVVTESLPNAMFRVDLDNGFNVLAHISGKIRRNYIKILPGDRVKVELSPYDLNKGRITYRLKKK.

One can recognise an S1-like domain in the interval 1–72 (MSKEDAIEME…NKGRITYRLK (72 aa)).

Belongs to the IF-1 family. As to quaternary structure, component of the 30S ribosomal translation pre-initiation complex which assembles on the 30S ribosome in the order IF-2 and IF-3, IF-1 and N-formylmethionyl-tRNA(fMet); mRNA recruitment can occur at any time during PIC assembly.

It localises to the cytoplasm. Its function is as follows. One of the essential components for the initiation of protein synthesis. Stabilizes the binding of IF-2 and IF-3 on the 30S subunit to which N-formylmethionyl-tRNA(fMet) subsequently binds. Helps modulate mRNA selection, yielding the 30S pre-initiation complex (PIC). Upon addition of the 50S ribosomal subunit IF-1, IF-2 and IF-3 are released leaving the mature 70S translation initiation complex. The polypeptide is Translation initiation factor IF-1 (Synechococcus sp. (strain JA-2-3B'a(2-13)) (Cyanobacteria bacterium Yellowstone B-Prime)).